Reading from the N-terminus, the 46-residue chain is Lariatin (46 aa).

The propeptide occupies 1 to 26; it reads MTSQPSKKTYNAPSLVQRGKFARTTA. The isoglutamyl glycine isopeptide (Gly-Glu) cross-link spans 27–34; that stretch reads GSQLVYRE.

Post-translationally, the linear precursor LarA is probably cleaved by the putative peptidase LarD, generating linear 18-residue Lariatin-A or 20-residue Lariatin-B. These linear peptides are probably cross-linked by LarB. Finally, lariatins A and B may be exported by ABC transporter LarE.

Its function is as follows. Peptide antibiotic with selective activity against Mycobacterium species (M.smegmatis, MIC=3.13 ug/ml and M.tuberculosis, MIC=0.39 ug/ml). it is plausible that the target of lariatins lies within the cell wall in mycobacteria. Functionally, peptide antibiotic with selective activity against Mycobacterium species (M.smegmatis, MIC=6.25 ug/ml). This Rhodococcus jostii protein is Lariatin.